An 85-amino-acid chain; its full sequence is Large ribosomal subunit protein bL27 (85 aa).

Residues 1-10 (MAQKKGGGST) show a composition bias toward gly residues. The interval 1 to 21 (MAQKKGGGSTRNGRDSQPKML) is disordered.

This sequence belongs to the bacterial ribosomal protein bL27 family.

The polypeptide is Large ribosomal subunit protein bL27 (Polaromonas naphthalenivorans (strain CJ2)).